A 45-amino-acid polypeptide reads, in one-letter code: Bomanin Short 1 (45 aa).

The first 20 residues, methionine 1–alanine 20, serve as a signal peptide directing secretion. Positions valine 21–proline 27 are cleaved as a propeptide — removed by a dipeptidylpeptidase. The cysteines at positions 36 and 39 are disulfide-linked. A Glycine amide modification is found at glycine 43.

Hemolymph (at protein level).

It is found in the secreted. Secreted immune-induced peptide induced by Toll signaling. Has a role in resistance to bacterial and fungal infections. Has no activity against the fungus C.glabrata in vitro. In Drosophila melanogaster (Fruit fly), this protein is Bomanin Short 1.